We begin with the raw amino-acid sequence, 186 residues long: ADP-ribosylation factor-like protein 8 (186 aa).

Residues 1–19 (MLALINRILEWFKSIFWKE) constitute an intramembrane region (note=Mediates targeting to membranes). Residues 29–35 (QFSGKTT), 71–75 (DIGGQ), and 130–133 (NKRD) contribute to the GTP site.

The protein belongs to the small GTPase superfamily. Arf family. In terms of assembly, interacts with tubulin. Interacts (in GTP-bound form) with Rilpl. Interacts with unc-104. In terms of tissue distribution, expressed throughout development, from embryo to adult stage, in different tissues such as larval motor neurons, salivary glands, testis and ovaries (at protein level).

The protein localises to the lysosome membrane. The protein resides in the synapse. It localises to the cell projection. It is found in the axon. Its subcellular location is the perikaryon. Functionally, required for normal functioning of the late endocytic pathway including lysosome motility and late endosome-lysosome fusion. Not required for the delivery of lysosomal membrane protein-containing vesicles to late endosomes. In larval motor neurons, mediates the anterograde axonal long-range transport of presynaptic lysosome-related vesicles required for presynaptic biogenesis and synaptic function. Acts downstream of Rab2 during presynaptic precursor vesicle biogenesis. Essential role in chromosome segregation. In Drosophila melanogaster (Fruit fly), this protein is ADP-ribosylation factor-like protein 8.